Consider the following 96-residue polypeptide: MLLKLNIQLFASKKGVGSTRNGRDSHSKRLGAKISDGQYATAGSIIYRQRGTKIHPGYNVGVGSDYTLFTKINGFIKYTNKKNKKQVSVYENIKKI.

Residues 1–10 constitute a propeptide that is removed on maturation; the sequence is MLLKLNIQLF.

This sequence belongs to the bacterial ribosomal protein bL27 family. Post-translationally, the N-terminus is cleaved by ribosomal processing cysteine protease Prp.

The protein is Large ribosomal subunit protein bL27 of Phytoplasma mali (strain AT).